The primary structure comprises 266 residues: 4-diphosphocytidyl-2-C-methyl-D-erythritol kinase (266 aa).

Lys-11 is an active-site residue. 103–113 (PTFAGLGGGSS) is a binding site for ATP. The active site involves Asp-145.

Belongs to the GHMP kinase family. IspE subfamily.

It catalyses the reaction 4-CDP-2-C-methyl-D-erythritol + ATP = 4-CDP-2-C-methyl-D-erythritol 2-phosphate + ADP + H(+). The protein operates within isoprenoid biosynthesis; isopentenyl diphosphate biosynthesis via DXP pathway; isopentenyl diphosphate from 1-deoxy-D-xylulose 5-phosphate: step 3/6. Functionally, catalyzes the phosphorylation of the position 2 hydroxy group of 4-diphosphocytidyl-2C-methyl-D-erythritol. In Sulfurimonas denitrificans (strain ATCC 33889 / DSM 1251) (Thiomicrospira denitrificans (strain ATCC 33889 / DSM 1251)), this protein is 4-diphosphocytidyl-2-C-methyl-D-erythritol kinase.